Here is a 313-residue protein sequence, read N- to C-terminus: Probable 5-dehydro-4-deoxyglucarate dehydratase (313 aa).

This sequence belongs to the DapA family.

It catalyses the reaction 5-dehydro-4-deoxy-D-glucarate + H(+) = 2,5-dioxopentanoate + CO2 + H2O. Its pathway is carbohydrate acid metabolism; D-glucarate degradation; 2,5-dioxopentanoate from D-glucarate: step 2/2. This chain is Probable 5-dehydro-4-deoxyglucarate dehydratase, found in Bradyrhizobium sp. (strain BTAi1 / ATCC BAA-1182).